We begin with the raw amino-acid sequence, 190 residues long: Dynein axonemal light chain 1 (190 aa).

LRR repeat units lie at residues 49–70 (VCEK…NGLK), 71–92 (NLKI…EAVG), 94–115 (SLEE…HVLK), and 116–137 (KLKV…NKLQ). One can recognise an LRRCT domain in the interval 150–190 (NPLEEKHSAEGDWQDRVTKSLKALKKLDGTPIIKNDEEEED).

Belongs to the dynein light chain LC1-type family. As to quaternary structure, interacts with DNAH5, a outer arm dynein heavy chain. Interacts with tubulin located within the A-tubule of the outer doublets in a ATP-independent manner.

It localises to the cytoplasm. The protein localises to the cytoskeleton. It is found in the cilium axoneme. Part of the multisubunit axonemal ATPase complexes that generate the force for cilia motility and govern beat frequency. Component of the outer arm dynein (ODA). May be involved in a mechanosensory feedback mechanism controlling ODA activity based on external conformational cues by tethering the outer arm dynein heavy chain (DNAH5) to the microtubule within the axoneme. In Ciona intestinalis (Transparent sea squirt), this protein is Dynein axonemal light chain 1 (DNAL1).